Here is a 20-residue protein sequence, read N- to C-terminus: Octopamine receptor (20 aa).

The protein belongs to the G-protein coupled receptor 1 family.

It is found in the cell membrane. Its function is as follows. Putative receptor for octopamine. Octopamine (OA) is a neurotransmitter, neurohormone, and neuromodulator in invertebrates. The activity of this receptor is mediated by G proteins which activate adenylyl cyclase. The protein is Octopamine receptor of Photinus pyralis (Common eastern firefly).